A 111-amino-acid polypeptide reads, in one-letter code: Large ribosomal subunit protein P1 (111 aa).

A compositionally biased stretch (low complexity) spans 65–89 (SGAGSGPAPAAAAAAPAAGGAAPAA). Residues 65–111 (SGAGSGPAPAAAAAAPAAGGAAPAAETKKKEEPKEESDDDMGFGLFD) are disordered.

It belongs to the eukaryotic ribosomal protein P1/P2 family. As to quaternary structure, P1 and P2 exist as dimers at the large ribosomal subunit.

Functionally, plays an important role in the elongation step of protein synthesis. The polypeptide is Large ribosomal subunit protein P1 (Caenorhabditis elegans).